The sequence spans 81 residues: RNA-binding protein Hfq (81 aa).

Residues 9–68 (DPFLNVLRRERVPVFIYLINGIKLQGEIESFDKFVILLRNTVNQMIYKHAISTIVPSRVV) enclose the Sm domain.

Belongs to the Hfq family. In terms of assembly, homohexamer.

Its function is as follows. RNA chaperone that binds small regulatory RNA (sRNAs) and mRNAs to facilitate mRNA translational regulation in response to envelope stress, environmental stress and changes in metabolite concentrations. Also binds with high specificity to tRNAs. In Blochmanniella pennsylvanica (strain BPEN), this protein is RNA-binding protein Hfq.